We begin with the raw amino-acid sequence, 807 residues long: Glycerol-3-phosphate acyltransferase (807 aa).

Positions 308-313 (CHRSHM) match the HXXXXD motif motif.

This sequence belongs to the GPAT/DAPAT family.

The protein localises to the cell inner membrane. It carries out the reaction sn-glycerol 3-phosphate + an acyl-CoA = a 1-acyl-sn-glycero-3-phosphate + CoA. Its pathway is phospholipid metabolism; CDP-diacylglycerol biosynthesis; CDP-diacylglycerol from sn-glycerol 3-phosphate: step 1/3. The sequence is that of Glycerol-3-phosphate acyltransferase from Shewanella sp. (strain W3-18-1).